Reading from the N-terminus, the 185-residue chain is MIEASKLKAGMTFEAEGKLIRVLEASHHKPGKGNTIMRMKLRDVRTGSTFDTTYRPDEKFEQAIIETVPAQYLYKMDDTAYFMNTDTYDQYEIPVANVEQELLYILENSDVKIQFYGSEVIGVTVPTTVELTVAETQPSIKGATVTGSGKPATLETGLVVNVPDFIEAGQKLIINTAEGTYVSRA.

Belongs to the elongation factor P family.

It localises to the cytoplasm. It functions in the pathway protein biosynthesis; polypeptide chain elongation. Involved in peptide bond synthesis. Stimulates efficient translation and peptide-bond synthesis on native or reconstituted 70S ribosomes in vitro. Probably functions indirectly by altering the affinity of the ribosome for aminoacyl-tRNA, thus increasing their reactivity as acceptors for peptidyl transferase. The sequence is that of Elongation factor P from Streptococcus pyogenes serotype M5 (strain Manfredo).